We begin with the raw amino-acid sequence, 448 residues long: Adenylosuccinate synthetase (448 aa).

GTP is bound by residues 22–28 (GDEGKGK) and 50–52 (GHT). The active-site Proton acceptor is Asp23. Residues Asp23 and Gly50 each coordinate Mg(2+). IMP contacts are provided by residues 23 to 26 (DEGK), 48 to 51 (NAGH), Thr139, Arg153, Gln234, Thr249, and Arg321. The active-site Proton donor is His51. A substrate-binding site is contributed by 317–323 (SVTGRPR). Residues Arg323, 349 to 351 (KLD), and 431 to 433 (STG) each bind GTP.

The protein belongs to the adenylosuccinate synthetase family. As to quaternary structure, homodimer. It depends on Mg(2+) as a cofactor.

It localises to the cytoplasm. It carries out the reaction IMP + L-aspartate + GTP = N(6)-(1,2-dicarboxyethyl)-AMP + GDP + phosphate + 2 H(+). The protein operates within purine metabolism; AMP biosynthesis via de novo pathway; AMP from IMP: step 1/2. Its function is as follows. Plays an important role in the de novo pathway of purine nucleotide biosynthesis. Catalyzes the first committed step in the biosynthesis of AMP from IMP. The protein is Adenylosuccinate synthetase of Burkholderia thailandensis (strain ATCC 700388 / DSM 13276 / CCUG 48851 / CIP 106301 / E264).